The sequence spans 1403 residues: E3 ubiquitin-protein ligase SNT2 (1403 aa).

Residues 40-62 are disordered; the sequence is SGAKTKGSNSQTPRNCKRTSNPA. Residues 45 to 62 show a composition bias toward polar residues; the sequence is KGSNSQTPRNCKRTSNPA. One can recognise a BAH domain in the interval 121–258; it reads VLLSANDTIY…RYTLKYYKVY (138 aa). Residues 317–369 form a PHD-type 1 zinc finger; that stretch reads DKRCQFCKEWCIQKESLSCDECGVCAHLYCMDPPLDRKPNKDVVWTCFSCLQK. Residues 555 to 606 form the SANT domain; sequence LKEPSFTAVEIRKFEEAVEKFGSELRPVCEYVGTQPMSMIVRFYYNWKKTER. Residues 1038-1097 form a PHD-type 2 zinc finger; it reads RTFCSVCKEKFNDNDNYEVVCGNCGLTVHYFCYAIKLPKDMKKNTNLKTFKWLCDPCSND. Residues 1041–1095 form an RING-type; degenerate zinc finger; sequence CSVCKEKFNDNDNYEVVCGNCGLTVHYFCYAIKLPKDMKKNTNLKTFKWLCDPCS. The C2HC pre-PHD-type zinc-finger motif lies at 1105–1153; that stretch reads TYQCSMCPTKDYDYDRYRSQSFKICPDALKCTSLGTWVHLVCSLFNEDI. A PHD-type 3; degenerate zinc finger spans residues 1177–1231; the sequence is FTCGVCRINGGGLVKCNKCQYRYHITCAQNSSNFKLMFEKKNMSVDTTLPCIKDV.

In terms of assembly, component of the Snt2C complex composed of SNT2, ECM5 and RPD3. Interacts with the E2 ubiquitin-conjugating enzyme UBC4 and histones H3 and H4. Binding is enhanced to methylated histone H3K36me3.

The protein localises to the cytoplasm. The protein resides in the nucleus. The catalysed reaction is S-ubiquitinyl-[E2 ubiquitin-conjugating enzyme]-L-cysteine + [acceptor protein]-L-lysine = [E2 ubiquitin-conjugating enzyme]-L-cysteine + N(6)-ubiquitinyl-[acceptor protein]-L-lysine.. In terms of biological role, transcriptional regulator that, together with ECM5, recruits histone deacetylase RPD3 to a small number of promoters of stress-response genes in response to oxidative stress. Probable ubiquitin-protein ligase involved in the degradation-related ubiquitination of histones. Contributes to the post-translational regulation of histone protein levels by polyubiquitination of excess histones for subsequent degradation. The polypeptide is E3 ubiquitin-protein ligase SNT2 (Saccharomyces cerevisiae (strain ATCC 204508 / S288c) (Baker's yeast)).